We begin with the raw amino-acid sequence, 394 residues long: Tryptophan synthase beta chain (394 aa).

Residue lysine 90 is modified to N6-(pyridoxal phosphate)lysine.

Belongs to the TrpB family. In terms of assembly, tetramer of two alpha and two beta chains. It depends on pyridoxal 5'-phosphate as a cofactor.

It carries out the reaction (1S,2R)-1-C-(indol-3-yl)glycerol 3-phosphate + L-serine = D-glyceraldehyde 3-phosphate + L-tryptophan + H2O. It functions in the pathway amino-acid biosynthesis; L-tryptophan biosynthesis; L-tryptophan from chorismate: step 5/5. Its function is as follows. The beta subunit is responsible for the synthesis of L-tryptophan from indole and L-serine. The chain is Tryptophan synthase beta chain from Parabacteroides distasonis (strain ATCC 8503 / DSM 20701 / CIP 104284 / JCM 5825 / NCTC 11152).